The primary structure comprises 167 residues: Transcriptional regulator MraZ (167 aa).

SpoVT-AbrB domains follow at residues 8 to 51 and 92 to 135; these read ESNH…YGDH and SFPT…NPAT.

Belongs to the MraZ family. In terms of assembly, forms oligomers.

Its subcellular location is the cytoplasm. The protein resides in the nucleoid. In Ruegeria pomeroyi (strain ATCC 700808 / DSM 15171 / DSS-3) (Silicibacter pomeroyi), this protein is Transcriptional regulator MraZ.